Consider the following 154-residue polypeptide: Transcriptional repressor NrdR (154 aa).

The segment at 3–34 (CPYCRHPDSRVVDSREADDGQLIRRRRSCPEC) is a zinc-finger region. The region spanning 46–136 (LAVVKRSGVT…VYRSFESLAD (91 aa)) is the ATP-cone domain.

This sequence belongs to the NrdR family. Zn(2+) is required as a cofactor.

Functionally, negatively regulates transcription of bacterial ribonucleotide reductase nrd genes and operons by binding to NrdR-boxes. This chain is Transcriptional repressor NrdR, found in Salinispora tropica (strain ATCC BAA-916 / DSM 44818 / JCM 13857 / NBRC 105044 / CNB-440).